A 295-amino-acid polypeptide reads, in one-letter code: uncharacterized protein (295 aa).

Belongs to the NAD(P)-dependent epimerase/dehydratase family.

This is an uncharacterized protein from Schizosaccharomyces pombe (strain 972 / ATCC 24843) (Fission yeast).